A 617-amino-acid chain; its full sequence is Tetratricopeptide repeat protein 39B (617 aa).

TPR repeat units lie at residues 328 to 361 (SLILFYHARIELLKGNTEKAQETFRKCISVQEEW), 520 to 553 (CLVKLLKGCCLKNLERPLQAELCFNHVVESEKLL), and 561 to 594 (PFTLFELAFLYKSQGEIDKAIKVLETARNNYKDY).

This sequence belongs to the TTC39 family. High expression in lung and spleen. Low lower expression in liver and small intestine. Weak expression in heart, brain, kidney, adipose, and adrenal gland.

In terms of biological role, regulates high density lipoprotein (HDL) cholesterol metabolism by promoting the ubiquitination and degradation of the oxysterols receptors LXR (NR1H2 and NR1H3). The polypeptide is Tetratricopeptide repeat protein 39B (Mus musculus (Mouse)).